Reading from the N-terminus, the 433-residue chain is MSENHEYLSQGGDWAQIVDEAAERGDETVVVNFGPSHPSTHGVMRLIIELDGESVSDLRVGIGFLHTGIEKNMEFRTWTQGVTFMTRCNYVANFFNELVYCLAVEKLLGITDDVPERARVLRVMITELNRISSHLIAVGTGGLELGASSVAEVGLREREIILEFNQAVTGLRMNNAWIRPGGVATDLPETGLDQLRDLIKRMEKYLPEIGQFCNENPIFKARTQGIGYADLSTCMALGVTGPALRATGLPWDLRKTQPYCDYDTYDFDVATWDTCDCYGRFRIRLEEMDQSVRILKQCLKRLEDTQGDRHMVEDPHIAWPAELALGPDGQGNSNEHIRHIMGESMEALIHHFKIVTEGFRVPAGQVYQAIEGAGGELGCHLVSDGGVRPYRSHLRDPGFVNVQSLPAMCEGGMLSDVVPSLASLDPVMGGVDR.

The protein belongs to the complex I 49 kDa subunit family. As to quaternary structure, NDH-1 is composed of 14 different subunits. Subunits NuoB, C, D, E, F, and G constitute the peripheral sector of the complex.

The protein localises to the cell membrane. It catalyses the reaction a quinone + NADH + 5 H(+)(in) = a quinol + NAD(+) + 4 H(+)(out). NDH-1 shuttles electrons from NADH, via FMN and iron-sulfur (Fe-S) centers, to quinones in the respiratory chain. The immediate electron acceptor for the enzyme in this species is believed to be a menaquinone. Couples the redox reaction to proton translocation (for every two electrons transferred, four hydrogen ions are translocated across the cytoplasmic membrane), and thus conserves the redox energy in a proton gradient. The protein is NADH-quinone oxidoreductase subunit D of Cutibacterium acnes (strain DSM 16379 / KPA171202) (Propionibacterium acnes).